Here is a 210-residue protein sequence, read N- to C-terminus: Thymidylate kinase (210 aa).

Position 10–17 (Gly10–Ser17) interacts with ATP.

Belongs to the thymidylate kinase family.

It carries out the reaction dTMP + ATP = dTDP + ADP. In terms of biological role, phosphorylation of dTMP to form dTDP in both de novo and salvage pathways of dTTP synthesis. The chain is Thymidylate kinase from Pseudomonas paraeruginosa (strain DSM 24068 / PA7) (Pseudomonas aeruginosa (strain PA7)).